We begin with the raw amino-acid sequence, 426 residues long: D-tagatose-1,6-bisphosphate aldolase subunit KbaZ (426 aa).

Belongs to the GatZ/KbaZ family. KbaZ subfamily. As to quaternary structure, forms a complex with KbaY.

Its pathway is carbohydrate metabolism; D-tagatose 6-phosphate degradation; D-glyceraldehyde 3-phosphate and glycerone phosphate from D-tagatose 6-phosphate: step 2/2. Functionally, component of the tagatose-1,6-bisphosphate aldolase KbaYZ that is required for full activity and stability of the Y subunit. Could have a chaperone-like function for the proper and stable folding of KbaY. When expressed alone, KbaZ does not show any aldolase activity. This Escherichia fergusonii (strain ATCC 35469 / DSM 13698 / CCUG 18766 / IAM 14443 / JCM 21226 / LMG 7866 / NBRC 102419 / NCTC 12128 / CDC 0568-73) protein is D-tagatose-1,6-bisphosphate aldolase subunit KbaZ.